We begin with the raw amino-acid sequence, 252 residues long: Protein Flattop homolog (252 aa).

Positions 177–252 (TEKRRRKRTI…EKERKAAKGH (76 aa)) are disordered. A compositionally biased stretch (basic and acidic residues) spans 218-252 (PKDKPKDKPKDKEAGKKDKTKDKGKEKERKAAKGH).

The protein belongs to the Flattop family.

The chain is Protein Flattop homolog from Drosophila melanogaster (Fruit fly).